We begin with the raw amino-acid sequence, 478 residues long: Argininosuccinate synthase (478 aa).

ATP is bound by residues alanine 17–serine 25 and alanine 43. Tyrosine 99 is an L-citrulline binding site. The ATP site is built by glycine 129 and threonine 131. L-aspartate contacts are provided by threonine 131, asparagine 135, and aspartate 136. Asparagine 135 lines the L-citrulline pocket. Aspartate 136 serves as a coordination point for ATP. L-citrulline contacts are provided by arginine 139 and serine 192. Aspartate 194 is an ATP binding site. Threonine 201, glutamate 203, and glutamate 280 together coordinate L-citrulline.

Belongs to the argininosuccinate synthase family. Type 2 subfamily. As to quaternary structure, homotetramer.

Its subcellular location is the cytoplasm. The enzyme catalyses L-citrulline + L-aspartate + ATP = 2-(N(omega)-L-arginino)succinate + AMP + diphosphate + H(+). It participates in amino-acid biosynthesis; L-arginine biosynthesis; L-arginine from L-ornithine and carbamoyl phosphate: step 2/3. This is Argininosuccinate synthase from Leifsonia xyli subsp. xyli (strain CTCB07).